The following is an 873-amino-acid chain: Bifunctional heparan sulfate N-deacetylase/N-sulfotransferase 3 (873 aa).

Over 1 to 13 (MSFIMKLHRHFQR) the chain is Cytoplasmic. The helical; Signal-anchor for type II membrane protein transmembrane segment at 14–34 (TVILLATFCMVSIIISAYYLY) threads the bilayer. Residues 35 to 873 (SGYKQENELS…WLRQELQKVR (839 aa)) are Lumenal-facing. Positions 36–589 (GYKQENELSE…KRHRDIWSKE (554 aa)) are heparan sulfate N-deacetylase 3. 4 N-linked (GlcNAc...) asparagine glycosylation sites follow: Asn-146, Asn-226, Asn-342, and Asn-392. The tract at residues 590–873 (KTCDRLPKFL…WLRQELQKVR (284 aa)) is heparan sulfate N-sulfotransferase 3. Catalysis depends on Lys-605, which acts as the For sulfotransferase activity. 605-609 (KTGTT) provides a ligand contact to 3'-phosphoadenylyl sulfate. The N-linked (GlcNAc...) asparagine glycan is linked to Asn-658. Ser-703 contacts 3'-phosphoadenylyl sulfate. Asn-794 carries N-linked (GlcNAc...) asparagine glycosylation. Cysteines 809 and 819 form a disulfide. Residue 824 to 828 (KGRKY) participates in 3'-phosphoadenylyl sulfate binding.

This sequence belongs to the sulfotransferase 1 family. NDST subfamily. In terms of assembly, monomer. In terms of tissue distribution, expressed in brain, kidney, liver, fetal and adult lung, adult pancreas, placenta, fetal spleen and fetal thymus. Not detected in adult/ fetal heart and skeletal muscle.

Its subcellular location is the golgi apparatus membrane. It carries out the reaction alpha-D-glucosaminyl-[heparan sulfate](n) + 3'-phosphoadenylyl sulfate = N-sulfo-alpha-D-glucosaminyl-[heparan sulfate](n) + adenosine 3',5'-bisphosphate + 2 H(+). It functions in the pathway glycan metabolism; heparan sulfate biosynthesis. It participates in glycan metabolism; heparin biosynthesis. In terms of biological role, essential bifunctional enzyme that catalyzes both the N-deacetylation and the N-sulfation of glucosamine (GlcNAc) of the glycosaminoglycan in heparan sulfate. Modifies the GlcNAc-GlcA disaccharide repeating sugar backbone to make N-sulfated heparosan, a prerequisite substrate for later modifications in heparin biosynthesis. Has high deacetylase activity but low sulfotransferase activity. This Homo sapiens (Human) protein is Bifunctional heparan sulfate N-deacetylase/N-sulfotransferase 3.